We begin with the raw amino-acid sequence, 301 residues long: Protoheme IX farnesyltransferase (301 aa).

The next 9 helical transmembrane spans lie at Leu-34–Ile-54, Gly-55–Trp-75, Ala-102–Val-121, Ser-125–Leu-144, Ile-152–Gly-172, Leu-181–Leu-201, Ser-222–Val-242, Leu-247–Phe-267, and Gly-280–Val-300.

It belongs to the UbiA prenyltransferase family. Protoheme IX farnesyltransferase subfamily.

It is found in the cell inner membrane. The catalysed reaction is heme b + (2E,6E)-farnesyl diphosphate + H2O = Fe(II)-heme o + diphosphate. The protein operates within porphyrin-containing compound metabolism; heme O biosynthesis; heme O from protoheme: step 1/1. Its function is as follows. Converts heme B (protoheme IX) to heme O by substitution of the vinyl group on carbon 2 of heme B porphyrin ring with a hydroxyethyl farnesyl side group. This is Protoheme IX farnesyltransferase from Anaplasma marginale (strain Florida).